The following is a 313-amino-acid chain: Acetyl-coenzyme A carboxylase carboxyl transferase subunit beta, chloroplastic (313 aa).

One can recognise a CoA carboxyltransferase N-terminal domain in the interval 47 to 313 (LWTRCDNCEN…SAPCRRSNNS (267 aa)). Residues cysteine 51, cysteine 54, cysteine 70, and cysteine 73 each coordinate Zn(2+). The C4-type zinc finger occupies 51–73 (CDNCENMLYIRFLRQNKRICEEC).

The protein belongs to the AccD/PCCB family. Acetyl-CoA carboxylase is a heterohexamer composed of biotin carboxyl carrier protein, biotin carboxylase and 2 subunits each of ACCase subunit alpha and ACCase plastid-coded subunit beta (accD). The cofactor is Zn(2+).

It is found in the plastid. The protein resides in the chloroplast stroma. The enzyme catalyses N(6)-carboxybiotinyl-L-lysyl-[protein] + acetyl-CoA = N(6)-biotinyl-L-lysyl-[protein] + malonyl-CoA. The protein operates within lipid metabolism; malonyl-CoA biosynthesis; malonyl-CoA from acetyl-CoA: step 1/1. In terms of biological role, component of the acetyl coenzyme A carboxylase (ACC) complex. Biotin carboxylase (BC) catalyzes the carboxylation of biotin on its carrier protein (BCCP) and then the CO(2) group is transferred by the transcarboxylase to acetyl-CoA to form malonyl-CoA. This is Acetyl-coenzyme A carboxylase carboxyl transferase subunit beta, chloroplastic from Anthoceros angustus (Hornwort).